The sequence spans 345 residues: L-threonine 3-dehydrogenase (345 aa).

Zn(2+) is bound at residue Cys42. Residues Thr44 and His47 each act as charge relay system in the active site. His67, Glu68, Cys97, Cys100, Cys103, and Cys111 together coordinate Zn(2+). Residues Ile179, Asp199, Arg204, 266–268 (LGI), and 290–291 (IY) each bind NAD(+).

The protein belongs to the zinc-containing alcohol dehydrogenase family. In terms of assembly, homotetramer. Zn(2+) is required as a cofactor.

It localises to the cytoplasm. The enzyme catalyses L-threonine + NAD(+) = (2S)-2-amino-3-oxobutanoate + NADH + H(+). Its pathway is amino-acid degradation; L-threonine degradation via oxydo-reductase pathway; glycine from L-threonine: step 1/2. Catalyzes the NAD(+)-dependent oxidation of L-threonine to 2-amino-3-ketobutyrate. In Rhizobium etli (strain ATCC 51251 / DSM 11541 / JCM 21823 / NBRC 15573 / CFN 42), this protein is L-threonine 3-dehydrogenase.